Reading from the N-terminus, the 823-residue chain is ATP-dependent RNA helicase HrpA (823 aa).

The Helicase ATP-binding domain maps to 16–179 (IKVLKNHNVL…FNNAPVVSIE (164 aa)). 29 to 36 (SPTGSGKT) provides a ligand contact to ATP. The DEAH box signature appears at 126–129 (DEAH). The Helicase C-terminal domain occupies 203 to 374 (KIKEIVLNVI…EVVLRMADIG (172 aa)).

Belongs to the DEAD box helicase family. DEAH subfamily.

It carries out the reaction ATP + H2O = ADP + phosphate + H(+). Its function is as follows. Has RNA-stimulated ATPase activity and RNA helicase activity. Involved in global regulation of gene expression. Could be involved in RNA processing and post-transcriptional gene regulation. Essential for both tick transmission and mouse infection. The chain is ATP-dependent RNA helicase HrpA from Borreliella burgdorferi (strain ATCC 35210 / DSM 4680 / CIP 102532 / B31) (Borrelia burgdorferi).